A 228-amino-acid chain; its full sequence is Prolactin-2B1 (228 aa).

An N-terminal signal peptide occupies residues 1–31; sequence MLLSLTQMLSSRASSRLFLVSYLLLWENVVS. 2 disulfide bridges follow: cysteine 89/cysteine 194 and cysteine 203/cysteine 228.

It belongs to the somatotropin/prolactin family. Expressed specifically in placenta. Expressed at high levels in trophoblast cells from both junctional and labyrinth zones of the chorioallantoic placenta the last week of gestation.

Its subcellular location is the secreted. In Mus musculus (Mouse), this protein is Prolactin-2B1 (Prl2b1).